The chain runs to 985 residues: Translation initiation factor IF-2 (985 aa).

Basic and acidic residues-rich tracts occupy residues 49-58 (QYGKKQEKSS), 65-89 (IQRE…RPDN), and 99-113 (VPNR…DKAK). A disordered region spans residues 49 to 401 (QYGKKQEKSS…QQSAPPPILD (353 aa)). Over residues 125–136 (SKTTTNSENEQT) the composition is skewed to polar residues. Over residues 137–162 (APRQGSAQQSGQGRPQANRPQGSQGR) the composition is skewed to low complexity. Gly residues-rich tracts occupy residues 180 to 246 (PQGG…GQGR) and 288 to 324 (PQGG…GAGR). Residues 349–377 (KAPDKTKGDRRKNYEKDGKWADGQIEKNK) are compositionally biased toward basic and acidic residues. Basic residues predominate over residues 378-391 (LFKGRNNKNKKRQH). The region spanning 485-654 (LRPPVVTIMG…LLVAEVHELK (170 aa)) is the tr-type G domain. The segment at 494 to 501 (GHVDHGKT) is G1. 494-501 (GHVDHGKT) contacts GTP. Residues 519 to 523 (GITQH) are G2. Residues 540–543 (DTPG) are G3. Residues 540–544 (DTPGH) and 594–597 (NKMD) contribute to the GTP site. Positions 594–597 (NKMD) are G4. Positions 630-632 (SAK) are G5.

It belongs to the TRAFAC class translation factor GTPase superfamily. Classic translation factor GTPase family. IF-2 subfamily.

It localises to the cytoplasm. Its function is as follows. One of the essential components for the initiation of protein synthesis. Protects formylmethionyl-tRNA from spontaneous hydrolysis and promotes its binding to the 30S ribosomal subunits. Also involved in the hydrolysis of GTP during the formation of the 70S ribosomal complex. The polypeptide is Translation initiation factor IF-2 (Desulforamulus reducens (strain ATCC BAA-1160 / DSM 100696 / MI-1) (Desulfotomaculum reducens)).